Consider the following 646-residue polypeptide: Autophagy-related protein 28 (646 aa).

2 disordered regions span residues 1 to 148 (MSSP…HVDN) and 221 to 245 (PTRS…RGLK). Positions 12–21 (SPRQRLSNPL) are enriched in polar residues. A compositionally biased stretch (low complexity) spans 63 to 75 (SATSTRRSSSPAS). A compositionally biased stretch (polar residues) spans 106–122 (MMMNQHPSRQSTVSSHG). Coiled-coil stretches lie at residues 283-350 (LDKM…MEDV) and 485-514 (QQAA…ESKH). Disordered regions lie at residues 475 to 494 (SQAG…SQLS) and 546 to 612 (AAAV…RGSA). 2 stretches are compositionally biased toward basic and acidic residues: residues 557 to 575 (STDK…SHDE) and 588 to 597 (RMEDHDHDPP).

The protein belongs to the ATG28 family.

The protein localises to the cytoplasm. It is found in the vacuole membrane. The protein resides in the cytoplasmic vesicle membrane. Its function is as follows. Required for the autophagic degradation of peroxisomes called pexophagy, but not essential for general autophagy. Involved in resistance to elevated pH. In Gibberella zeae (strain ATCC MYA-4620 / CBS 123657 / FGSC 9075 / NRRL 31084 / PH-1) (Wheat head blight fungus), this protein is Autophagy-related protein 28.